An 85-amino-acid chain; its full sequence is U4-theraphotoxin-Hhn1i (85 aa).

The first 22 residues, methionine 1–alanine 22, serve as a signal peptide directing secretion. A propeptide spanning residues glutamate 23 to arginine 48 is cleaved from the precursor. Intrachain disulfides connect cysteine 52-cysteine 66, cysteine 56-cysteine 77, and cysteine 71-cysteine 82.

This sequence belongs to the neurotoxin 12 (Hwtx-2) family. 02 (Hwtx-2) subfamily. Expressed by the venom gland.

It is found in the secreted. Its function is as follows. Postsynaptic neurotoxin. This is U4-theraphotoxin-Hhn1i from Cyriopagopus hainanus (Chinese bird spider).